We begin with the raw amino-acid sequence, 491 residues long: uncharacterized protein (491 aa).

266-273 (GIQGTGKS) serves as a coordination point for ATP.

Belongs to the AAA ATPase family. Highly divergent.

The protein localises to the plastid. Its subcellular location is the chloroplast. This is an uncharacterized protein from Porphyra purpurea (Red seaweed).